The sequence spans 558 residues: Protein SET DOMAIN GROUP 41 (558 aa).

The region spanning 115-249 (PSISVAIHHA…SGEEITVSYI (135 aa)) is the SET domain.

The protein belongs to the class V-like SAM-binding methyltransferase superfamily.

This Arabidopsis thaliana (Mouse-ear cress) protein is Protein SET DOMAIN GROUP 41 (SDG41).